Reading from the N-terminus, the 433-residue chain is uncharacterized protein (433 aa).

The region spanning 61–178 (RFNHSLGVYE…QIDADRMDYL (118 aa)) is the HD domain.

This is an uncharacterized protein from Bacillus subtilis (strain 168).